We begin with the raw amino-acid sequence, 747 residues long: Probable alpha-galactosidase C (747 aa).

Positions 1 to 24 (MVAFMNSATFVAGLFTLWSRPIWA) are cleaved as a signal peptide. N-linked (GlcNAc...) asparagine glycans are attached at residues asparagine 36, asparagine 182, asparagine 190, asparagine 362, asparagine 429, and asparagine 449. Aspartate 507 (nucleophile) is an active-site residue. A glycan (N-linked (GlcNAc...) asparagine) is linked at asparagine 534. The active-site Proton donor is the aspartate 569.

The protein belongs to the glycosyl hydrolase 36 family. As to quaternary structure, homotetramer. Requires Mg(2+) as cofactor. The cofactor is NAD(+).

It localises to the secreted. It catalyses the reaction Hydrolysis of terminal, non-reducing alpha-D-galactose residues in alpha-D-galactosides, including galactose oligosaccharides, galactomannans and galactolipids.. Its function is as follows. Hydrolyzes a variety of simple alpha-D-galactoside as well as more complex molecules such as oligosaccharides and polysaccharides. The protein is Probable alpha-galactosidase C (aglC) of Aspergillus terreus (strain NIH 2624 / FGSC A1156).